Here is a 606-residue protein sequence, read N- to C-terminus: 4-hydroxy-3-methylbut-2-en-1-yl diphosphate synthase (flavodoxin) (606 aa).

The [4Fe-4S] cluster site is built by C513, C516, C547, and E554.

It belongs to the IspG family. [4Fe-4S] cluster serves as cofactor.

The enzyme catalyses (2E)-4-hydroxy-3-methylbut-2-enyl diphosphate + oxidized [flavodoxin] + H2O + 2 H(+) = 2-C-methyl-D-erythritol 2,4-cyclic diphosphate + reduced [flavodoxin]. The protein operates within isoprenoid biosynthesis; isopentenyl diphosphate biosynthesis via DXP pathway; isopentenyl diphosphate from 1-deoxy-D-xylulose 5-phosphate: step 5/6. In terms of biological role, converts 2C-methyl-D-erythritol 2,4-cyclodiphosphate (ME-2,4cPP) into 1-hydroxy-2-methyl-2-(E)-butenyl 4-diphosphate. This chain is 4-hydroxy-3-methylbut-2-en-1-yl diphosphate synthase (flavodoxin), found in Chlamydia felis (strain Fe/C-56) (Chlamydophila felis).